A 488-amino-acid chain; its full sequence is NADH-quinone oxidoreductase subunit N 2 (488 aa).

14 helical membrane-spanning segments follow: residues 18–38 (FLPE…ELFI), 45–65 (LVLN…LLIP), 81–101 (PLAV…LPFA), 110–130 (SFYG…FVLA), 135–155 (LIIL…LTAL), 169–189 (YLIL…FMYI), 210–230 (LVLG…AVPF), 242–262 (PTPV…IPLV), 274–294 (LVWT…GNLV), 308–328 (SSIA…VIGM), 331–351 (VIYF…VLAL), 375–395 (IAFA…TVGF), 412–434 (WLAF…LVVV), and 458–478 (FALT…WFLI).

This sequence belongs to the complex I subunit 2 family. NDH-1 is composed of 14 different subunits. Subunits NuoA, H, J, K, L, M, N constitute the membrane sector of the complex.

It localises to the cell inner membrane. It catalyses the reaction a quinone + NADH + 5 H(+)(in) = a quinol + NAD(+) + 4 H(+)(out). NDH-1 shuttles electrons from NADH, via FMN and iron-sulfur (Fe-S) centers, to quinones in the respiratory chain. The immediate electron acceptor for the enzyme in this species is believed to be ubiquinone. Couples the redox reaction to proton translocation (for every two electrons transferred, four hydrogen ions are translocated across the cytoplasmic membrane), and thus conserves the redox energy in a proton gradient. This is NADH-quinone oxidoreductase subunit N 2 from Aquifex aeolicus (strain VF5).